Here is a 1369-residue protein sequence, read N- to C-terminus: DNA-directed RNA polymerase subunit beta' (1369 aa).

The interval 1 to 43 is disordered; that stretch reads MTSSSPKTRKSSTKSKAKRGSKSKKAAEIKAVQRLSKTPPPFR. Residues 7-24 are compositionally biased toward basic residues; sequence KTRKSSTKSKAKRGSKSK. Zn(2+) is bound by residues cysteine 253, cysteine 320, cysteine 327, and cysteine 330. The segment at 1294–1369 is disordered; sequence TVDMPSSPVA…LQEEGLLSDE (76 aa). Acidic residues predominate over residues 1342 to 1351; sequence DDELSAEDQM. The span at 1357 to 1369 shows a compositional bias: low complexity; it reads LEGLQEEGLLSDE.

This sequence belongs to the RNA polymerase beta' chain family. RpoC2 subfamily. In cyanobacteria the RNAP catalytic core is composed of 2 alpha, 1 beta, 1 beta', 1 gamma and 1 omega subunit. When a sigma factor is associated with the core the holoenzyme is formed, which can initiate transcription. The cofactor is Zn(2+).

It carries out the reaction RNA(n) + a ribonucleoside 5'-triphosphate = RNA(n+1) + diphosphate. In terms of biological role, DNA-dependent RNA polymerase catalyzes the transcription of DNA into RNA using the four ribonucleoside triphosphates as substrates. In Prochlorococcus marinus (strain NATL1A), this protein is DNA-directed RNA polymerase subunit beta'.